The following is a 472-amino-acid chain: ATP synthase subunit beta (472 aa).

149–156 (GGAGVGKT) contacts ATP.

This sequence belongs to the ATPase alpha/beta chains family. F-type ATPases have 2 components, CF(1) - the catalytic core - and CF(0) - the membrane proton channel. CF(1) has five subunits: alpha(3), beta(3), gamma(1), delta(1), epsilon(1). CF(0) has three main subunits: a(1), b(2) and c(9-12). The alpha and beta chains form an alternating ring which encloses part of the gamma chain. CF(1) is attached to CF(0) by a central stalk formed by the gamma and epsilon chains, while a peripheral stalk is formed by the delta and b chains.

The protein resides in the cell inner membrane. It carries out the reaction ATP + H2O + 4 H(+)(in) = ADP + phosphate + 5 H(+)(out). In terms of biological role, produces ATP from ADP in the presence of a proton gradient across the membrane. The catalytic sites are hosted primarily by the beta subunits. This is ATP synthase subunit beta from Pelagibacter ubique (strain HTCC1062).